Reading from the N-terminus, the 358-residue chain is Fructose-bisphosphate aldolase class 2 (358 aa).

S61 is a D-glyceraldehyde 3-phosphate binding site. Catalysis depends on D109, which acts as the Proton donor. 4 residues coordinate Zn(2+): H110, D144, E174, and H226. Residue G227 participates in dihydroxyacetone phosphate binding. H264 is a binding site for Zn(2+). Dihydroxyacetone phosphate is bound by residues 265–267 (GGS) and 286–289 (NIDT).

This sequence belongs to the class II fructose-bisphosphate aldolase family. Zn(2+) serves as cofactor.

The catalysed reaction is beta-D-fructose 1,6-bisphosphate = D-glyceraldehyde 3-phosphate + dihydroxyacetone phosphate. Its pathway is carbohydrate degradation; glycolysis; D-glyceraldehyde 3-phosphate and glycerone phosphate from D-glucose: step 4/4. Its function is as follows. Catalyzes the aldol condensation of dihydroxyacetone phosphate (DHAP or glycerone-phosphate) with glyceraldehyde 3-phosphate (G3P) to form fructose 1,6-bisphosphate (FBP) in gluconeogenesis and the reverse reaction in glycolysis. This is Fructose-bisphosphate aldolase class 2 (fbaA) from Buchnera aphidicola subsp. Acyrthosiphon pisum (strain APS) (Acyrthosiphon pisum symbiotic bacterium).